The primary structure comprises 561 residues: DNA ligase B (561 aa).

Lysine 125 (N6-AMP-lysine intermediate) is an active-site residue.

Belongs to the NAD-dependent DNA ligase family. LigB subfamily.

The catalysed reaction is NAD(+) + (deoxyribonucleotide)n-3'-hydroxyl + 5'-phospho-(deoxyribonucleotide)m = (deoxyribonucleotide)n+m + AMP + beta-nicotinamide D-nucleotide.. In terms of biological role, catalyzes the formation of phosphodiester linkages between 5'-phosphoryl and 3'-hydroxyl groups in double-stranded DNA using NAD as a coenzyme and as the energy source for the reaction. The polypeptide is DNA ligase B (Salmonella paratyphi B (strain ATCC BAA-1250 / SPB7)).